Here is a 201-residue protein sequence, read N- to C-terminus: Potassium-transporting ATPase KdpC subunit (201 aa).

The chain crosses the membrane as a helical span at residues I13 to I33.

This sequence belongs to the KdpC family. The system is composed of three essential subunits: KdpA, KdpB and KdpC.

The protein localises to the cell membrane. Functionally, part of the high-affinity ATP-driven potassium transport (or Kdp) system, which catalyzes the hydrolysis of ATP coupled with the electrogenic transport of potassium into the cytoplasm. This subunit acts as a catalytic chaperone that increases the ATP-binding affinity of the ATP-hydrolyzing subunit KdpB by the formation of a transient KdpB/KdpC/ATP ternary complex. This is Potassium-transporting ATPase KdpC subunit from Clostridium botulinum (strain Eklund 17B / Type B).